Consider the following 863-residue polypeptide: MDARGGGGRPGDSPGATPAPGPPPPPPPPAPPQPQPPPAPPPNPTTPSHPESADEPGPRSRLCSRDSSCTPGAAKGGANGECGRGEPQCSPEGPARGPKVSFSCRGAASGPAAAEEAGSEEAGPAGEPRGSQASFLQRQFGALLQPGVNKFSLRMFGSQKAVEREQERVKSAGAWIIHPYSDFRFYWDFTMLLFMVGNLIIIPVGITFFKDETTAPWIVFNVVSDTFFLMDLVLNFRTGIVIEDNTEIILDPEKIKKKYLRTWFVVDFVSSIPVDYIFLIVEKGIDSEVYKTARALRIVRFTKILSLLRLLRLSRLIRYIHQWEEIFHMTYDLASAVMRICNLISMMLLLCHWDGCLQFLVPMLQDFPSDCWVSINNMVNHSWSELYSFALFKAMSHMLCIGYGRQAPESMTDIWLTMLSMIVGATCYAMFIGHATALIQSLDSSRRQYQEKYKQVEQYMSFHKLPADFRQKIHDYYEHRYQGKMFDEDSILGELNGPLREEIVNFNCRKLVASMPLFANADPNFVTAMLTKLKFEVFQPGDYIIREGTIGKKMYFIQHGVVSVLTKGNKEMKLSDGSYFGEICLLTRGRRTASVRADTYCRLYSLSVDNFNEVLEEYPMMRRAFETVAIDRLDRIGKKNSILLHKVQHDLSSGVFNNQENAIIQEIVKYDREMVQQAELGQRVGLFPPPPPPQVTSAIATLQQAVAMSFCPQVARPLVGPLALGSPRLVRRAPPGPLPPAASPGPPAASPPAAPSSPRAPRTSPYGVPGSPATRVGPALPARRLSRASRPLSASQPSLPHGAPAPSPAASARPASSSTPRLGPAPTTRTAAPSPDRRDSASPGAASGLDPLDSARSRLSSNL.

The segment covering 1–10 has biased composition (gly residues); sequence MDARGGGGRP. The interval 1–131 is disordered; sequence MDARGGGGRP…AGPAGEPRGS (131 aa). The Cytoplasmic portion of the chain corresponds to 1–188; the sequence is MDARGGGGRP…PYSDFRFYWD (188 aa). Pro residues predominate over residues 17–47; that stretch reads TPAPGPPPPPPPPAPPQPQPPPAPPPNPTTP. Residues 106–128 are compositionally biased toward low complexity; that stretch reads GAASGPAAAEEAGSEEAGPAGEP. 2 positions are modified to phosphoserine: Ser-119 and Ser-134. Residues 131 to 182 form an involved in subunit assembly region; it reads SQASFLQRQFGALLQPGVNKFSLRMFGSQKAVEREQERVKSAGAWIIHPYSD. A helical membrane pass occupies residues 189–209; that stretch reads FTMLLFMVGNLIIIPVGITFF. Residues 210-213 are Extracellular-facing; the sequence is KDET. A helical membrane pass occupies residues 214–234; that stretch reads TAPWIVFNVVSDTFFLMDLVL. Residues 235 to 261 lie on the Cytoplasmic side of the membrane; the sequence is NFRTGIVIEDNTEIILDPEKIKKKYLR. A helical transmembrane segment spans residues 262–282; the sequence is TWFVVDFVSSIPVDYIFLIVE. Residues 283–290 are Extracellular-facing; the sequence is KGIDSEVY. A helical; Voltage-sensor membrane pass occupies residues 291–311; that stretch reads KTARALRIVRFTKILSLLRLL. Residues 312-342 lie on the Cytoplasmic side of the membrane; the sequence is RLSRLIRYIHQWEEIFHMTYDLASAVMRICN. Residues 343 to 363 traverse the membrane as a helical segment; the sequence is LISMMLLLCHWDGCLQFLVPM. Over 364–386 the chain is Extracellular; sequence LQDFPSDCWVSINNMVNHSWSEL. Asn-380 carries N-linked (GlcNAc...) asparagine glycosylation. An intramembrane region (pore-forming) is located at residues 387–408; that stretch reads YSFALFKAMSHMLCIGYGRQAP. Residues 409-413 are Extracellular-facing; sequence ESMTD. Residues 414–434 traverse the membrane as a helical segment; sequence IWLTMLSMIVGATCYAMFIGH. The Cytoplasmic segment spans residues 435-863; it reads ATALIQSLDS…SARSRLSSNL (429 aa). The 3',5'-cyclic AMP site is built by Gly-581, Glu-582, Cys-584, Arg-591, Thr-592, and Arg-632. Ser-641 is subject to Phosphoserine; by PKG/PRKG2. Phosphoserine is present on Ser-726. An Omega-N-methylarginine modification is found at Arg-728. Residues 730 to 863 are disordered; it reads VRRAPPGPLP…SARSRLSSNL (134 aa). The segment covering 734–755 has biased composition (pro residues); sequence PPGPLPPAASPGPPAASPPAAP. 3 positions are modified to phosphoserine: Ser-743, Ser-750, and Ser-757. 2 stretches are compositionally biased toward low complexity: residues 756–765 and 778–834; these read SSPRAPRTSP and PALP…AAPS. Residues Ser-840, Ser-842, and Ser-847 each carry the phosphoserine modification.

Belongs to the potassium channel HCN family. As to quaternary structure, homotetramer. The channel is composed of a homo- or heterotetrameric complex of pore-forming subunits. Heterotetramer with HCN1. Forms an obligate 4:4 complex with accessory subunit PEX5L. Interacts with KCNE2. In terms of processing, phosphorylation at Ser-641 by PRKG2 shifts the voltage-dependence to more negative voltages, hence counteracting the stimulatory effect of cGMP on gating. Post-translationally, N-glycosylated; required for cell surface trafficking of HCN2. S-palmitoylated. Highly expressed in neonatal and adult ventricle and in brain. Highly expressed in the pyramidal layer in hippocampus, in anterior dorsal nucleus in thalamus, in the mammillary nucleus in hypothalamus, in red nucleus, in trigeminal mesencephalic, spinal and principal nuclei, in cochlear and trapezoid nuclei and in the dorsal tegemental nucleus.

It localises to the cell membrane. It catalyses the reaction Na(+)(in) = Na(+)(out). The enzyme catalyses K(+)(in) = K(+)(out). The catalysed reaction is NH4(+)(in) = NH4(+)(out). With respect to regulation, activated by cAMP, and at 10-100 times higher concentrations, also by cGMP. cAMP binding causes a conformation change that leads to the assembly of an active tetramer and channel opening. In the absence of cAMP, the C-terminal region is thought to exert a tonic inhibition on the pore when HCN2 is in a non-tetrameric form. Channel activity is modulated by intracellular chloride ions and pH; acidic pH shifts the activation to more negative voltages. Phosphatidylinositol-4,5- bisphosphate (PIP(2)) acts as a ligand that allosterically opens HCN2 by shifting voltage-dependent channel activation toward depolarized potentials. Inhibited by extracellular cesium ions. Functionally, hyperpolarization-activated ion channel exhibiting weak selectivity for potassium over sodium ions. Contributes to the native pacemaker currents in heart (If) and in neurons (Ih). Can also transport ammonium in the distal nephron. Involved in the initiation of neuropathic pain in sensory neurons. Produces a large instantaneous current. The polypeptide is Potassium/sodium hyperpolarization-activated cyclic nucleotide-gated channel 2 (Hcn2) (Rattus norvegicus (Rat)).